A 297-amino-acid chain; its full sequence is Cyclin-dependent kinase 1 (297 aa).

Methionine 1 bears the N-acetylmethionine mark. The residue at position 4 (tyrosine 4) is a Phosphotyrosine; by PKR. Positions 4-287 constitute a Protein kinase domain; that stretch reads YTKIEKIGEG…GKMALNHPYF (284 aa). N6-acetyllysine; alternate occurs at positions 6 and 9. Glycyl lysine isopeptide (Lys-Gly) (interchain with G-Cter in SUMO2); alternate cross-links involve residues lysine 6 and lysine 9. 10–18 is a binding site for ATP; the sequence is IGEGTYGVV. A Phosphothreonine; by PKMYT1 modification is found at threonine 14. Tyrosine 15 is modified (phosphotyrosine; by PKMYT1, WEE1, WEE2 and PKC/PRKCD). Phosphotyrosine is present on tyrosine 19. Lysine 20 is covalently cross-linked (Glycyl lysine isopeptide (Lys-Gly) (interchain with G-Cter in SUMO2)). Lysine 33 contributes to the ATP binding site. Serine 39 is subject to Phosphoserine. Tyrosine 77 bears the Phosphotyrosine mark. Aspartate 128 serves as the catalytic Proton acceptor. A Glycyl lysine isopeptide (Lys-Gly) (interchain with G-Cter in SUMO2) cross-link involves residue lysine 139. Phosphothreonine is present on threonine 141. Position 161 is a phosphothreonine; by CAK (threonine 161). Serine 178 carries the phosphoserine modification. Residue threonine 222 is modified to Phosphothreonine. Lysine 245 carries the N6-succinyllysine modification. Phosphoserine is present on serine 248.

It belongs to the protein kinase superfamily. CMGC Ser/Thr protein kinase family. CDC2/CDKX subfamily. In terms of assembly, forms a stable but non-covalent complex with a regulatory subunit and with a cyclin. The cyclin subunit imparts substrate specificity to the complex. Interacts with cyclins-B (CCNB1, CCNB2 and CCNB3) to form a serine/threonine kinase holoenzyme complex also known as maturation promoting factor (MPF). Promotes G2-M transition when in complex with a cyclin-B. Can also form CDK1-cylin-D and CDK1-cyclin-E complexes that phosphorylate RB1 in vitro. Associates with cyclins-A and B1 during S-phase in regenerating hepatocytes. Interacts with DLGAP5. Binds to the CDK inhibitors CDKN1A/p21 and CDKN1B/p27. Interacts with catalytically active CCNB1 and RALBP1 during mitosis to form an endocytotic complex during interphase. Interacts with FANCC. Interacts with CEP63; this interaction recruits CDK1 to centrosomes. Interacts with CENPA. Interacts with NR1D1. Interacts with proteasome subunit PSMA8; to participate in meiosis progression during spermatogenesis. Unable to complex with cyclin-B1 and also fails to bind to CDKN1A/p21. As to quaternary structure, (Microbial infection) Interacts with severe fever with thrombocytopenia syndrome virus (SFTSV) NSs; this interaction is inclusion body dependent, it inhibits the formation and nuclear import of the cyclin B1-CDK1 complex and leads to cell cycle arrest. In terms of processing, phosphorylation at Thr-161 by CAK/CDK7 activates kinase activity. Phosphorylation at Thr-14 and Tyr-15 by PKMYT1 prevents nuclear translocation. Phosphorylation at Tyr-15 by WEE1 and WEE2 inhibits the protein kinase activity and acts as a negative regulator of entry into mitosis (G2 to M transition). Phosphorylation by PKMYT1 and WEE1 takes place during mitosis to keep CDK1-cyclin-B complexes inactive until the end of G2. By the end of G2, PKMYT1 and WEE1 are inactivated, but CDC25A and CDC25B are activated. Dephosphorylation by active CDC25A and CDC25B at Thr-14 and Tyr-15, leads to CDK1 activation at the G2-M transition. Phosphorylation at Tyr-15 by WEE2 during oogenesis is required to maintain meiotic arrest in oocytes during the germinal vesicle (GV) stage, a long period of quiescence at dictyate prophase I, leading to prevent meiotic reentry. Phosphorylation by WEE2 is also required for metaphase II exit during egg activation to ensure exit from meiosis in oocytes and promote pronuclear formation. Phosphorylated at Tyr-4 by PKR/EIF2AK2 upon genotoxic stress. This phosphorylation triggers CDK1 polyubiquitination and subsequent proteolysis, thus leading to G2 arrest. In response to UV irradiation, phosphorylation at Tyr-15 by PRKCD activates the G2/M DNA damage checkpoint. Polyubiquitinated upon genotoxic stress. As to expression, found in breast cancer tissues.

It localises to the nucleus. The protein localises to the cytoplasm. It is found in the mitochondrion. Its subcellular location is the cytoskeleton. The protein resides in the microtubule organizing center. It localises to the centrosome. The protein localises to the spindle. It catalyses the reaction L-seryl-[protein] + ATP = O-phospho-L-seryl-[protein] + ADP + H(+). The catalysed reaction is L-threonyl-[protein] + ATP = O-phospho-L-threonyl-[protein] + ADP + H(+). The enzyme catalyses [DNA-directed RNA polymerase] + ATP = phospho-[DNA-directed RNA polymerase] + ADP + H(+). With respect to regulation, phosphorylation at Thr-14 or Tyr-15 inactivates the enzyme, while phosphorylation at Thr-161 activates it. Activated through a multistep process; binding to cyclin-B is required for relocation of cyclin-kinase complexes to the nucleus, activated by CAK/CDK7-mediated phosphorylation on Thr-161, and CDC25-mediated dephosphorylation of inhibitory phosphorylation on Thr-14 and Tyr-15. Activity is restricted during S-phase in an ATR-dependent manner to prevent premature entry into G2. Repressed by the CDK inhibitors CDKN1A/p21 and CDKN1B/p27 during the G1 phase and by CDKN1A/p21 at the G1-S checkpoint upon DNA damage. Transient activation by rapid and transient dephosphorylation at Tyr-15 triggered by TGFB1. Inhibited by flavopiridol and derivatives, pyrimidine derivatives, pyridine derivatives, purine derivatives, staurosporine, paullones, oxoindoles, indazole analogs, indolin-2-ones, pyrazolo[3,4-b]pyridines, imidazo[1,2-a]pyridine (AZ703), thiazolinone analogs(RO-3306), thiazol urea, macrocyclic quinoxalin-2-one, pyrrolo[2,3-a]carbazole, pyrazolo[1,5-a]-1,3,5-triazine, pyrazolo[1,5-a]pyrimidine (Dinaciclib, SCH 727965), 2-(1-ethyl-2-hydroxyethylamino)-6-benzylamino-9-isopropylpurine (roscovitine), olomoucine, AG-024322, AT-7519, P276-00, R547/Ro-4584820 and SNS-032/BMS-387032. Plays a key role in the control of the eukaryotic cell cycle by modulating the centrosome cycle as well as mitotic onset; promotes G2-M transition via association with multiple interphase cyclins. Phosphorylates PARVA/actopaxin, APC, AMPH, APC, BARD1, Bcl-xL/BCL2L1, BRCA2, CALD1, CASP8, CDC7, CDC20, CDC25A, CDC25C, CC2D1A, CENPA, CSNK2 proteins/CKII, FZR1/CDH1, CDK7, CEBPB, CHAMP1, DMD/dystrophin, EEF1 proteins/EF-1, EZH2, KIF11/EG5, EGFR, FANCG, FOS, GFAP, GOLGA2/GM130, GRASP1, UBE2A/hHR6A, HIST1H1 proteins/histone H1, HMGA1, HIVEP3/KRC, KAT5, LMNA, LMNB, LBR, MKI67, LATS1, MAP1B, MAP4, MARCKS, MCM2, MCM4, MKLP1, MLST8, MYB, NEFH, NFIC, NPC/nuclear pore complex, PITPNM1/NIR2, NPM1, NCL, NUCKS1, NPM1/numatrin, ORC1, PRKAR2A, EEF1E1/p18, EIF3F/p47, p53/TP53, NONO/p54NRB, PAPOLA, PLEC/plectin, RB1, TPPP, UL40/R2, RAB4A, RAP1GAP, RBBP8/CtIP, RCC1, RPS6KB1/S6K1, KHDRBS1/SAM68, ESPL1, SKI, BIRC5/survivin, STIP1, TEX14, beta-tubulins, MAPT/TAU, NEDD1, VIM/vimentin, TK1, FOXO1, RUNX1/AML1, SAMHD1, SIRT2, CGAS and RUNX2. CDK1/CDC2-cyclin-B controls pronuclear union in interphase fertilized eggs. Essential for early stages of embryonic development. During G2 and early mitosis, CDC25A/B/C-mediated dephosphorylation activates CDK1/cyclin complexes which phosphorylate several substrates that trigger at least centrosome separation, Golgi dynamics, nuclear envelope breakdown and chromosome condensation. Once chromosomes are condensed and aligned at the metaphase plate, CDK1 activity is switched off by WEE1- and PKMYT1-mediated phosphorylation to allow sister chromatid separation, chromosome decondensation, reformation of the nuclear envelope and cytokinesis. Phosphorylates KRT5 during prometaphase and metaphase. Inactivated by PKR/EIF2AK2- and WEE1-mediated phosphorylation upon DNA damage to stop cell cycle and genome replication at the G2 checkpoint thus facilitating DNA repair. Reactivated after successful DNA repair through WIP1-dependent signaling leading to CDC25A/B/C-mediated dephosphorylation and restoring cell cycle progression. Catalyzes lamin (LMNA, LMNB1 and LMNB2) phosphorylation at the onset of mitosis, promoting nuclear envelope breakdown. In proliferating cells, CDK1-mediated FOXO1 phosphorylation at the G2-M phase represses FOXO1 interaction with 14-3-3 proteins and thereby promotes FOXO1 nuclear accumulation and transcription factor activity, leading to cell death of postmitotic neurons. The phosphorylation of beta-tubulins regulates microtubule dynamics during mitosis. NEDD1 phosphorylation promotes PLK1-mediated NEDD1 phosphorylation and subsequent targeting of the gamma-tubulin ring complex (gTuRC) to the centrosome, an important step for spindle formation. In addition, CC2D1A phosphorylation regulates CC2D1A spindle pole localization and association with SCC1/RAD21 and centriole cohesion during mitosis. The phosphorylation of Bcl-xL/BCL2L1 after prolongated G2 arrest upon DNA damage triggers apoptosis. In contrast, CASP8 phosphorylation during mitosis prevents its activation by proteolysis and subsequent apoptosis. This phosphorylation occurs in cancer cell lines, as well as in primary breast tissues and lymphocytes. EZH2 phosphorylation promotes H3K27me3 maintenance and epigenetic gene silencing. CALD1 phosphorylation promotes Schwann cell migration during peripheral nerve regeneration. CDK1-cyclin-B complex phosphorylates NCKAP5L and mediates its dissociation from centrosomes during mitosis. Regulates the amplitude of the cyclic expression of the core clock gene BMAL1 by phosphorylating its transcriptional repressor NR1D1, and this phosphorylation is necessary for SCF(FBXW7)-mediated ubiquitination and proteasomal degradation of NR1D1. Phosphorylates EML3 at 'Thr-881' which is essential for its interaction with HAUS augmin-like complex and TUBG1. Phosphorylates CGAS during mitosis, leading to its inhibition, thereby preventing CGAS activation by self DNA during mitosis. Phosphorylates SKA3 on multiple sites during mitosis which promotes SKA3 binding to the NDC80 complex and anchoring of the SKA complex to kinetochores, to enable stable attachment of mitotic spindle microtubules to kinetochores. In terms of biological role, (Microbial infection) Acts as a receptor for hepatitis C virus (HCV) in hepatocytes and facilitates its cell entry. The polypeptide is Cyclin-dependent kinase 1 (CDK1) (Homo sapiens (Human)).